We begin with the raw amino-acid sequence, 156 residues long: ATP synthase subunit b', chloroplastic (156 aa).

The chain crosses the membrane as a helical span at residues 20–42 (NGTLPLMALQFLTLMVLLNTIFY).

The protein belongs to the ATPase B chain family. F-type ATPases have 2 components, F(1) - the catalytic core - and F(0) - the membrane proton channel. F(1) has five subunits: alpha(3), beta(3), gamma(1), delta(1), epsilon(1). F(0) has four main subunits: a(1), b(1), b'(1) and c(10-14). The alpha and beta chains form an alternating ring which encloses part of the gamma chain. F(1) is attached to F(0) by a central stalk formed by the gamma and epsilon chains, while a peripheral stalk is formed by the delta, b and b' chains.

The protein localises to the plastid. Its subcellular location is the chloroplast thylakoid membrane. Its function is as follows. F(1)F(0) ATP synthase produces ATP from ADP in the presence of a proton or sodium gradient. F-type ATPases consist of two structural domains, F(1) containing the extramembraneous catalytic core and F(0) containing the membrane proton channel, linked together by a central stalk and a peripheral stalk. During catalysis, ATP synthesis in the catalytic domain of F(1) is coupled via a rotary mechanism of the central stalk subunits to proton translocation. In terms of biological role, component of the F(0) channel, it forms part of the peripheral stalk, linking F(1) to F(0). The b'-subunit is a diverged and duplicated form of b found in plants and photosynthetic bacteria. The sequence is that of ATP synthase subunit b', chloroplastic from Pyropia yezoensis (Susabi-nori).